We begin with the raw amino-acid sequence, 305 residues long: uncharacterized protein (305 aa).

This is an uncharacterized protein from Acanthamoeba polyphaga mimivirus (APMV).